We begin with the raw amino-acid sequence, 27 residues long: Flagellar filament 31.5 kDa core protein (27 aa).

This sequence belongs to the bacterial flagellin family. The flagellum consists of an outer layer composed of repeating units of FlaA around a core that contains one or all of five antigenically related polypeptides.

Its subcellular location is the periplasmic flagellum. It is found in the periplasm. Functionally, component of the core of the flagella. This Spirochaeta aurantia protein is Flagellar filament 31.5 kDa core protein.